The sequence spans 973 residues: DNA repair protein rhp26 (973 aa).

The stretch at 35 to 107 (ESREIEKKRL…DIKRRLNNED (73 aa)) forms a coiled coil. The segment at 230 to 251 (RDQASASENNKDRGEFEGKDEW) is disordered. Residues 238-251 (NNKDRGEFEGKDEW) are compositionally biased toward basic and acidic residues. The Helicase ATP-binding domain occupies 289 to 490 (WELYCQEAGG…WNLFDFVFPG (202 aa)). ATP is bound at residue 302–309 (DEMGLGKT). The interval 367-386 (SREKRQYESDASESEAEESK) is disordered. The DEAH box motif lies at 441 to 444 (DEGH). One can recognise a Helicase C-terminal domain in the interval 629 to 789 (VIRALLTLWK…RRFFKMTDLH (161 aa)). Disordered stretches follow at residues 803-846 (ETGS…KGKK), 863-882 (KYKPPQESNVTKTNSDSTLG), and 930-973 (AVSS…KQRR). The segment covering 834–846 (DRKKHKIHDKGKK) has biased composition (basic residues). 2 stretches are compositionally biased toward polar residues: residues 868 to 882 (QESNVTKTNSDSTLG) and 947 to 965 (STNVPGTSKPSGPITSSTL).

The protein localises to the cytoplasm. It localises to the nucleus. Its function is as follows. Involved in transcription-coupled repair (TCR). The protein is DNA repair protein rhp26 (rhp26) of Schizosaccharomyces pombe (strain 972 / ATCC 24843) (Fission yeast).